We begin with the raw amino-acid sequence, 609 residues long: D-apionate lactonase (609 aa).

It carries out the reaction D-apionolactone + H2O = D-apionate + H(+). The protein operates within carbohydrate metabolism. Involved in catabolism of D-apiose. Hydrolyzes D-apionolactone to D-apionate. This is D-apionate lactonase from Brucella anthropi (strain ATCC 49188 / DSM 6882 / CCUG 24695 / JCM 21032 / LMG 3331 / NBRC 15819 / NCTC 12168 / Alc 37) (Ochrobactrum anthropi).